Reading from the N-terminus, the 109-residue chain is Larval cuticle protein 1 (109 aa).

An N-terminal signal peptide occupies residues 1–14 (MILVALALVALAVA). A Chitin-binding type R&amp;R domain is found at 34-107 (EGSYQFGFET…AEGSSIPKPA (74 aa)).

In terms of biological role, component of the cuticle of the larva of Helicoverpa armigera. This chain is Larval cuticle protein 1 (LCP1), found in Helicoverpa armigera (Cotton bollworm).